The sequence spans 449 residues: Zinc finger and BTB domain-containing protein 14 (449 aa).

In terms of domain architecture, BTB spans 36-102; sequence CDIAIVVEDV…MYTAKISVKK (67 aa). A Glycyl lysine isopeptide (Lys-Gly) (interchain with G-Cter in SUMO2) cross-link involves residue Lys46. Residues 50 to 66 carry the Nuclear localization signal motif; sequence HRCVLAACSTYFKKLFK. Positions 156–194 are disordered; sequence ADAQDDDVEEIGDQDDSPSDDTVEGTPPSQEDGKSPTTT. The segment covering 157-178 has biased composition (acidic residues); that stretch reads DAQDDDVEEIGDQDDSPSDDTV. Glycyl lysine isopeptide (Lys-Gly) (interchain with G-Cter in SUMO2) cross-links involve residues Lys203 and Lys249. 5 C2H2-type zinc fingers span residues 277-304, 305-332, 333-360, 361-388, and 389-417; these read IACQ…ADRP, FVCE…GYKP, YSCE…NERP, FACH…GEKP, and FVCG…ERKQ. The segment covering 405-417 has biased composition (basic and acidic residues); it reads KRHENNMHSERKQ. The tract at residues 405–424 is disordered; sequence KRHENNMHSERKQVTPSAIQ.

Belongs to the krueppel C2H2-type zinc-finger protein family. Interacts with ZBTB21. In terms of tissue distribution, ubiquitous.

It is found in the nucleus. Functionally, transcriptional activator of the dopamine transporter (DAT), binding it's promoter at the consensus sequence 5'-CCTGCACAGTTCACGGA-3'. Binds to 5'-d(GCC)(n)-3' trinucleotide repeats in promoter regions and acts as a repressor of the FMR1 gene. Transcriptional repressor of MYC and thymidine kinase promoters. This chain is Zinc finger and BTB domain-containing protein 14 (Zbtb14), found in Mus musculus (Mouse).